Here is a 170-residue protein sequence, read N- to C-terminus: Cathelicidin antimicrobial peptide (170 aa).

The N-terminal stretch at 1–30 (MKTQRDSPSLGRWSLVLLLLGLVMPLAIVA) is a signal peptide. A propeptide spans 31 to 131 (QVLSYQEAVL…DISCDKDNRR (101 aa)) (cathelin-like domain (CLD)). 2 cysteine pairs are disulfide-bonded: Cys-86-Cys-97 and Cys-108-Cys-125. Positions 150–162 (FKRIVQRIKDFLQ) are active core.

Belongs to the cathelicidin family. In terms of assembly, monomer, homodimer or homotrimer (in vitro). Oligomerizes as tetra- or hexamer in solution (in vitro). In terms of processing, proteolytically cleaved by proteinase PRTN3 into antibacterial peptide LL-37. Proteolytically cleaved by cathepsin CTSG and neutrophil elastase ELANE. Resistant to proteolytic degradation in solution, and when bound to both zwitterionic (mimicking mammalian membranes) and negatively charged membranes (mimicking bacterial membranes). Post-translationally, after secretion onto the skin surface, the CAMP gene product is processed by a serine protease-dependent mechanism into multiple novel antimicrobial peptides distinct from and shorter than cathelicidin LL-37. These peptides show enhanced antimicrobial action, acquiring the ability to kill skin pathogens such as S.aureus, E.coli and C.albicans. These peptides have lost the ability to stimulate CXCL8/IL8 release from keratinocytes. The peptides act synergistically, killing bacteria at lower concentrations when present together, and maintain activity at increased salt condition.

The protein localises to the secreted. It localises to the vesicle. Its function is as follows. Antimicrobial protein that is an integral component of the innate immune system. Binds to bacterial lipopolysaccharides (LPS). Acts via neutrophil N-formyl peptide receptors to enhance the release of CXCL2. Postsecretory processing generates multiple cathelicidin antimicrobial peptides with various lengths which act as a topical antimicrobial defense in sweat on skin. The unprocessed precursor form, cathelicidin antimicrobial peptide, inhibits the growth of Gram-negative E.coli and E.aerogenes with efficiencies comparable to that of the mature peptide LL-37 (in vitro). In terms of biological role, antimicrobial peptide that is an integral component of the innate immune system. Binds to bacterial lipopolysaccharides (LPS). Causes membrane permeabilization by forming transmembrane pores (in vitro). Causes lysis of E.coli. Exhibits antimicrobial activity against Gram-negative bacteria such as P.aeruginosa, S.typhimurium, E.aerogenes, E.coli and P.syringae, Gram-positive bacteria such as L.monocytogenes, S.epidermidis, S.pyogenes and S.aureus, as well as vancomycin-resistant enterococci (in vitro). Exhibits antimicrobial activity against methicillin-resistant S.aureus, P.mirabilis, and C.albicans in low-salt media, but not in media containing 100 mM NaCl (in vitro). Forms chiral supramolecular assemblies with quinolone signal (PQS) molecules of P.aeruginosa, which may lead to interference of bacterial quorum signaling and perturbance of bacterial biofilm formation. May form supramolecular fiber-like assemblies on bacterial membranes. Induces cytokine and chemokine producation as well as TNF/TNFA and CSF2/GMCSF production in normal human keratinocytes. Exhibits hemolytic activity against red blood cells. Exhibits antimicrobial activity against E.coli and B.megaterium (in vitro). The sequence is that of Cathelicidin antimicrobial peptide from Nomascus concolor (Black crested gibbon).